A 317-amino-acid chain; its full sequence is tRNA dimethylallyltransferase (317 aa).

14-21 (GPTAVGKT) lines the ATP pocket. Residue 16 to 21 (TAVGKT) participates in substrate binding. An interaction with substrate tRNA region spans residues 39–42 (DSMQ).

The protein belongs to the IPP transferase family. As to quaternary structure, monomer. Requires Mg(2+) as cofactor.

It catalyses the reaction adenosine(37) in tRNA + dimethylallyl diphosphate = N(6)-dimethylallyladenosine(37) in tRNA + diphosphate. Catalyzes the transfer of a dimethylallyl group onto the adenine at position 37 in tRNAs that read codons beginning with uridine, leading to the formation of N6-(dimethylallyl)adenosine (i(6)A). This Bacillus thuringiensis subsp. konkukian (strain 97-27) protein is tRNA dimethylallyltransferase.